The sequence spans 157 residues: Transcription elongation factor GreA (157 aa).

Belongs to the GreA/GreB family.

Functionally, necessary for efficient RNA polymerase transcription elongation past template-encoded arresting sites. The arresting sites in DNA have the property of trapping a certain fraction of elongating RNA polymerases that pass through, resulting in locked ternary complexes. Cleavage of the nascent transcript by cleavage factors such as GreA or GreB allows the resumption of elongation from the new 3'terminus. GreA releases sequences of 2 to 3 nucleotides. The sequence is that of Transcription elongation factor GreA from Chelativorans sp. (strain BNC1).